The chain runs to 536 residues: Chaperonin GroEL (536 aa).

Residues 30-33 (TLGP), 86-90 (DGTTT), Gly-414, and Asp-494 contribute to the ATP site.

The protein belongs to the chaperonin (HSP60) family. Forms a cylinder of 14 subunits composed of two heptameric rings stacked back-to-back. Interacts with the co-chaperonin GroES.

It localises to the cytoplasm. The catalysed reaction is ATP + H2O + a folded polypeptide = ADP + phosphate + an unfolded polypeptide.. In terms of biological role, together with its co-chaperonin GroES, plays an essential role in assisting protein folding. The GroEL-GroES system forms a nano-cage that allows encapsulation of the non-native substrate proteins and provides a physical environment optimized to promote and accelerate protein folding. In Methanosarcina barkeri (strain Fusaro / DSM 804), this protein is Chaperonin GroEL.